Consider the following 196-residue polypeptide: Ribonuclease HII (196 aa).

Residues K9 to E196 enclose the RNase H type-2 domain. Residues D15, E16, and D107 each contribute to the a divalent metal cation site.

It belongs to the RNase HII family. It depends on Mn(2+) as a cofactor. The cofactor is Mg(2+).

The protein resides in the cytoplasm. The enzyme catalyses Endonucleolytic cleavage to 5'-phosphomonoester.. Endonuclease that specifically degrades the RNA of RNA-DNA hybrids. This Aeromonas salmonicida (strain A449) protein is Ribonuclease HII.